Reading from the N-terminus, the 172-residue chain is uncharacterized protein (172 aa).

One can recognise an N-acetyltransferase domain in the interval 12-172 (IRLRCMEDRD…IAVYERKSYN (161 aa)).

This is an uncharacterized protein from Bacillus subtilis (strain 168).